A 199-amino-acid polypeptide reads, in one-letter code: MARTAHIVRETSESHIDLELNLDGTGKTDIDTSVPFYNHMMTALGKHSLIDLTIHAHGDTDIDVHHTVEDTAIVFGEALKQALGDKKGIRRFADATVPLDEALAKAVVDISGRPYCVCSGEPEGYEFCMIGGHFTGSLVRHVMESIAFHAGICLHMQVLAGRDPHHIAEAEFKALARALRFAVEIDPRVDGVPSTKGAL.

The protein belongs to the imidazoleglycerol-phosphate dehydratase family.

It is found in the cytoplasm. The catalysed reaction is D-erythro-1-(imidazol-4-yl)glycerol 3-phosphate = 3-(imidazol-4-yl)-2-oxopropyl phosphate + H2O. It participates in amino-acid biosynthesis; L-histidine biosynthesis; L-histidine from 5-phospho-alpha-D-ribose 1-diphosphate: step 6/9. In Bifidobacterium longum (strain NCC 2705), this protein is Imidazoleglycerol-phosphate dehydratase.